Reading from the N-terminus, the 181-residue chain is ATP-dependent protease subunit HslV (181 aa).

T7 is an active-site residue. 3 residues coordinate Na(+): G166, C169, and T172.

Belongs to the peptidase T1B family. HslV subfamily. In terms of assembly, a double ring-shaped homohexamer of HslV is capped on each side by a ring-shaped HslU homohexamer. The assembly of the HslU/HslV complex is dependent on binding of ATP.

The protein resides in the cytoplasm. The catalysed reaction is ATP-dependent cleavage of peptide bonds with broad specificity.. Allosterically activated by HslU binding. Functionally, protease subunit of a proteasome-like degradation complex believed to be a general protein degrading machinery. This chain is ATP-dependent protease subunit HslV, found in Delftia acidovorans (strain DSM 14801 / SPH-1).